A 468-amino-acid chain; its full sequence is Meiotically up-regulated gene 111 protein (468 aa).

The next 12 membrane-spanning stretches (helical) occupy residues 13–33, 59–79, 92–112, 116–136, 158–178, 190–210, 285–305, 330–350, 356–376, 382–402, 417–437, and 446–466; these read LVLI…NSVT, IVSA…VPFY, VFTT…SILY, FPTC…ISGT, IVVL…LGSI, LISW…AVFF, PIPI…FFDI, FGSL…GFSV, TMLI…FATA, LALF…LVAA, ALLE…AFIV, and FFIG…LLLG.

Its subcellular location is the membrane. In terms of biological role, has a role in meiosis. The protein is Meiotically up-regulated gene 111 protein (mug111) of Schizosaccharomyces pombe (strain 972 / ATCC 24843) (Fission yeast).